Reading from the N-terminus, the 569-residue chain is Pyruvate decarboxylase (569 aa).

Pyruvate is bound by residues aspartate 38 and histidine 124. Residues threonine 398 and 421–423 each bind thiamine diphosphate; that span reads GSI. Aspartate 451 serves as a coordination point for Mg(2+). Thiamine diphosphate is bound by residues 452–453 and 478–483; these read GS and NEGYTI. Mg(2+)-binding residues include asparagine 478 and glycine 480. Glutamate 484 provides a ligand contact to pyruvate.

It belongs to the TPP enzyme family. In terms of assembly, homotetramer. Mg(2+) serves as cofactor. Requires thiamine diphosphate as cofactor.

The enzyme catalyses a 2-oxocarboxylate + H(+) = an aldehyde + CO2. It carries out the reaction pyruvate + H(+) = acetaldehyde + CO2. The polypeptide is Pyruvate decarboxylase (pdcA) (Aspergillus fumigatus (strain ATCC MYA-4609 / CBS 101355 / FGSC A1100 / Af293) (Neosartorya fumigata)).